The primary structure comprises 957 residues: Receptor-like protein 53 (957 aa).

The first 30 residues, 1-30, serve as a signal peptide directing secretion; sequence MEGFWNSKSIIRITLSFIFLFICHFLDVLA. Over 31-910 the chain is Extracellular; that stretch reads APTRNLCRPE…EEEDEDLISW (880 aa). N-linked (GlcNAc...) asparagine glycans are attached at residues Asn78, Asn114, Asn143, Asn167, and Asn191. LRR repeat units lie at residues 120-143, 144-170, 172-192, 193-216, 217-240, 241-266, 268-287, 288-312, 313-336, 338-360, 361-384, and 386-409; these read LHFL…SIEN, LSHL…NLSR, TYLN…ICNL, SHLT…IGGL, SHLT…IGNL, SNLT…NLSQ, TFLG…SFGN, LNQL…LLNL, TGLS…ITSL, NLMD…LFTI, PSLT…NISS, and SNLY…ISKL. N-linked (GlcNAc...) asparagine glycosylation is found at Asn239, Asn242, Asn252, and Asn263. N-linked (GlcNAc...) asparagine glycosylation is found at Asn311 and Asn332. Asn381 carries an N-linked (GlcNAc...) asparagine glycan. Residues 412–433 form an LRR 13; degenerate repeat; it reads LFRLDISHLNTQGPVDFSIFSH. LRR repeat units follow at residues 434–458, 460–483, 486–509, 510–533, 535–556, 558–580, 581–604, 605–629, 631–651, 652–674, 675–697, 698–721, 765–789, 790–813, 814–837, and 839–862; these read LKSL…YFLS, FKRL…SVSD, SQLI…VRTQ, HELG…LWRL, ILYY…SKPE, SLLY…ICGL, RSLN…MGHL, KSTL…IFEI, RSLD…LSFF, STLE…WLSS, LPKL…EATF, PELR…YFVK, LTIY…IGLL, KELL…MGNL, TALE…LGDL, and FLAY…QFLT. 3 N-linked (GlcNAc...) asparagine glycosylation sites follow: Asn441, Asn446, and Asn477. N-linked (GlcNAc...) asparagine glycosylation is found at Asn540 and Asn543. N-linked (GlcNAc...) asparagine glycosylation is present at Asn594. Asn665 carries an N-linked (GlcNAc...) asparagine glycan. Asn711 carries an N-linked (GlcNAc...) asparagine glycan. A glycan (N-linked (GlcNAc...) asparagine) is linked at Asn812. Asn844 and Asn864 each carry an N-linked (GlcNAc...) asparagine glycan. Residues 911–931 traverse the membrane as a helical segment; it reads IAAAIGFGPGIAFGLMFGYIL. At 932 to 957 the chain is on the cytoplasmic side; it reads VSYKPEWFMNPFDRNNRRQKRHKTTH.

It belongs to the RLP family.

The protein localises to the cell membrane. The polypeptide is Receptor-like protein 53 (Arabidopsis thaliana (Mouse-ear cress)).